The primary structure comprises 63 residues: Cecropin-A1 (63 aa).

Positions 1-19 are cleaved as a signal peptide; the sequence is MNFYNIFVFVALILAITIG. Arg-62 bears the Arginine amide mark.

It belongs to the cecropin family.

It is found in the secreted. Cecropins have lytic and antibacterial activity against several Gram-positive and Gram-negative bacteria. This is Cecropin-A1 (CecA1) from Drosophila simulans (Fruit fly).